The chain runs to 215 residues: Peptide methionine sulfoxide reductase MsrA (215 aa).

Residue Cys58 is part of the active site.

Belongs to the MsrA Met sulfoxide reductase family.

It carries out the reaction L-methionyl-[protein] + [thioredoxin]-disulfide + H2O = L-methionyl-(S)-S-oxide-[protein] + [thioredoxin]-dithiol. It catalyses the reaction [thioredoxin]-disulfide + L-methionine + H2O = L-methionine (S)-S-oxide + [thioredoxin]-dithiol. Has an important function as a repair enzyme for proteins that have been inactivated by oxidation. Catalyzes the reversible oxidation-reduction of methionine sulfoxide in proteins to methionine. The polypeptide is Peptide methionine sulfoxide reductase MsrA (Pseudomonas savastanoi pv. phaseolicola (strain 1448A / Race 6) (Pseudomonas syringae pv. phaseolicola (strain 1448A / Race 6))).